Reading from the N-terminus, the 471-residue chain is Amidophosphoribosyltransferase (471 aa).

Residue C2 is the Nucleophile of the active site. One can recognise a Glutamine amidotransferase type-2 domain in the interval 2-224 (CGIFGIYSYE…PGEIIEIKDG (223 aa)). Residue C255 participates in [4Fe-4S] cluster binding. Mg(2+) is bound by residues S302, D364, and D365. C401, C450, and C453 together coordinate [4Fe-4S] cluster.

The protein in the C-terminal section; belongs to the purine/pyrimidine phosphoribosyltransferase family. The cofactor is Mg(2+). Requires [4Fe-4S] cluster as cofactor.

It catalyses the reaction 5-phospho-beta-D-ribosylamine + L-glutamate + diphosphate = 5-phospho-alpha-D-ribose 1-diphosphate + L-glutamine + H2O. It functions in the pathway purine metabolism; IMP biosynthesis via de novo pathway; N(1)-(5-phospho-D-ribosyl)glycinamide from 5-phospho-alpha-D-ribose 1-diphosphate: step 1/2. Its function is as follows. Catalyzes the formation of phosphoribosylamine from phosphoribosylpyrophosphate (PRPP) and glutamine. The sequence is that of Amidophosphoribosyltransferase from Methanocaldococcus jannaschii (strain ATCC 43067 / DSM 2661 / JAL-1 / JCM 10045 / NBRC 100440) (Methanococcus jannaschii).